A 248-amino-acid polypeptide reads, in one-letter code: Pyridoxal 4-dehydrogenase (248 aa).

NAD(+) is bound at residue 11–35 (LVTGAAQGIGKAIAARLAADGATVI). Ser-141 lines the substrate pocket. The Proton acceptor role is filled by Tyr-154.

The protein belongs to the short-chain dehydrogenases/reductases (SDR) family. In terms of assembly, homotetramer.

It catalyses the reaction pyridoxal + NAD(+) = 4-pyridoxolactone + NADH + H(+). It functions in the pathway cofactor degradation; B6 vitamer degradation; 4-pyridoxate from pyridoxal: step 1/2. Its function is as follows. Involved in the degradation of pyridoxine or pyridoxamine (free, phosphate-unbound, forms of vitamin B6). Oxidizes pyridoxal to 4-pyridoxolactone, but does not have activity toward pyridoxal 5'-phosphate, pyridoxine, pyridoxamine, pyridoxamine 5'-phosphate, 4-phthalaldehyde, 2-nitrobenzaldehyde, pyridine, formaldehyde, 2-carboxybenzaldehyde or sugars. The protein is Pyridoxal 4-dehydrogenase of Mesorhizobium japonicum (strain LMG 29417 / CECT 9101 / MAFF 303099) (Mesorhizobium loti (strain MAFF 303099)).